Reading from the N-terminus, the 314-residue chain is DNA-directed RNA polymerase subunit alpha (314 aa).

Residues 1 to 228 (MIEIEKPRIE…EHLNIFVDLT (228 aa)) form an alpha N-terminal domain (alpha-NTD) region. Residues 245-314 (KEKVLEMSIE…DLGLGLRKED (70 aa)) form an alpha C-terminal domain (alpha-CTD) region.

It belongs to the RNA polymerase alpha chain family. Homodimer. The RNAP catalytic core consists of 2 alpha, 1 beta, 1 beta' and 1 omega subunit. When a sigma factor is associated with the core the holoenzyme is formed, which can initiate transcription.

It catalyses the reaction RNA(n) + a ribonucleoside 5'-triphosphate = RNA(n+1) + diphosphate. DNA-dependent RNA polymerase catalyzes the transcription of DNA into RNA using the four ribonucleoside triphosphates as substrates. The protein is DNA-directed RNA polymerase subunit alpha of Macrococcus caseolyticus (strain JCSC5402) (Macrococcoides caseolyticum).